Reading from the N-terminus, the 545-residue chain is CTP synthase (545 aa).

Residues 1–266 (MATNYIFVTG…DTFVCDRFRL (266 aa)) are amidoligase domain. Ser14 is a CTP binding site. Ser14 is a UTP binding site. ATP-binding positions include 15-20 (SLGKGI) and Asp72. Mg(2+) contacts are provided by Asp72 and Glu140. Residues 147–149 (DIE), 187–192 (KTKPTQ), and Lys223 each bind CTP. UTP-binding positions include 187–192 (KTKPTQ) and Lys223. 239–241 (KDV) serves as a coordination point for ATP. Residues 291–542 (TIGMVGKYVE…VAAAKAYQDS (252 aa)) form the Glutamine amidotransferase type-1 domain. Gly352 lines the L-glutamine pocket. Cys379 serves as the catalytic Nucleophile; for glutamine hydrolysis. L-glutamine contacts are provided by residues 380-383 (LGMQ), Glu403, and Arg470. Residues His515 and Glu517 contribute to the active site.

The protein belongs to the CTP synthase family. As to quaternary structure, homotetramer.

It carries out the reaction UTP + L-glutamine + ATP + H2O = CTP + L-glutamate + ADP + phosphate + 2 H(+). The catalysed reaction is L-glutamine + H2O = L-glutamate + NH4(+). The enzyme catalyses UTP + NH4(+) + ATP = CTP + ADP + phosphate + 2 H(+). It functions in the pathway pyrimidine metabolism; CTP biosynthesis via de novo pathway; CTP from UDP: step 2/2. Allosterically activated by GTP, when glutamine is the substrate; GTP has no effect on the reaction when ammonia is the substrate. The allosteric effector GTP functions by stabilizing the protein conformation that binds the tetrahedral intermediate(s) formed during glutamine hydrolysis. Inhibited by the product CTP, via allosteric rather than competitive inhibition. Its function is as follows. Catalyzes the ATP-dependent amination of UTP to CTP with either L-glutamine or ammonia as the source of nitrogen. Regulates intracellular CTP levels through interactions with the four ribonucleotide triphosphates. The protein is CTP synthase of Actinobacillus pleuropneumoniae serotype 5b (strain L20).